Consider the following 326-residue polypeptide: Phosphate acyltransferase (326 aa).

The protein belongs to the PlsX family. In terms of assembly, homodimer. Probably interacts with PlsY.

It localises to the cytoplasm. It carries out the reaction a fatty acyl-[ACP] + phosphate = an acyl phosphate + holo-[ACP]. The protein operates within lipid metabolism; phospholipid metabolism. In terms of biological role, catalyzes the reversible formation of acyl-phosphate (acyl-PO(4)) from acyl-[acyl-carrier-protein] (acyl-ACP). This enzyme utilizes acyl-ACP as fatty acyl donor, but not acyl-CoA. In Thermus thermophilus (strain ATCC BAA-163 / DSM 7039 / HB27), this protein is Phosphate acyltransferase.